Consider the following 303-residue polypeptide: Probable serine/threonine-protein kinase FPV212 (303 aa).

The Protein kinase domain occupies 25-303 (WILGKQLGSG…NYESLKQMFL (279 aa)). Residues 31-39 (LGSGGFGLV) and Lys-54 each bind ATP. Asp-160 acts as the Proton acceptor in catalysis.

This sequence belongs to the protein kinase superfamily. Ser/Thr protein kinase family. Poxviruses subfamily.

The catalysed reaction is L-seryl-[protein] + ATP = O-phospho-L-seryl-[protein] + ADP + H(+). The enzyme catalyses L-threonyl-[protein] + ATP = O-phospho-L-threonyl-[protein] + ADP + H(+). The protein is Probable serine/threonine-protein kinase FPV212 of Vertebrata (FPV).